Reading from the N-terminus, the 179-residue chain is Large ribosomal subunit protein uL5 (179 aa).

It belongs to the universal ribosomal protein uL5 family. Part of the 50S ribosomal subunit; part of the 5S rRNA/L5/L18/L25 subcomplex. Contacts the 5S rRNA and the P site tRNA. Forms a bridge to the 30S subunit in the 70S ribosome.

This is one of the proteins that bind and probably mediate the attachment of the 5S RNA into the large ribosomal subunit, where it forms part of the central protuberance. In the 70S ribosome it contacts protein S13 of the 30S subunit (bridge B1b), connecting the 2 subunits; this bridge is implicated in subunit movement. Contacts the P site tRNA; the 5S rRNA and some of its associated proteins might help stabilize positioning of ribosome-bound tRNAs. The polypeptide is Large ribosomal subunit protein uL5 (Xylella fastidiosa (strain 9a5c)).